The following is a 426-amino-acid chain: Glutamyl-tRNA reductase (426 aa).

Residues 49 to 52 (TCNR), Ser109, 114 to 116 (EGQ), and Gln120 each bind substrate. The active-site Nucleophile is the Cys50. 189 to 194 (GAGETG) serves as a coordination point for NADP(+).

It belongs to the glutamyl-tRNA reductase family. As to quaternary structure, homodimer.

The catalysed reaction is (S)-4-amino-5-oxopentanoate + tRNA(Glu) + NADP(+) = L-glutamyl-tRNA(Glu) + NADPH + H(+). It participates in porphyrin-containing compound metabolism; protoporphyrin-IX biosynthesis; 5-aminolevulinate from L-glutamyl-tRNA(Glu): step 1/2. The protein operates within porphyrin-containing compound metabolism; chlorophyll biosynthesis. Its function is as follows. Catalyzes the NADPH-dependent reduction of glutamyl-tRNA(Glu) to glutamate 1-semialdehyde (GSA). In Prosthecochloris aestuarii (strain DSM 271 / SK 413), this protein is Glutamyl-tRNA reductase.